We begin with the raw amino-acid sequence, 311 residues long: tRNA(Ile)-lysidine synthase (311 aa).

31–36 (SGGKDS) contributes to the ATP binding site.

The protein belongs to the tRNA(Ile)-lysidine synthase family.

Its subcellular location is the cytoplasm. The enzyme catalyses cytidine(34) in tRNA(Ile2) + L-lysine + ATP = lysidine(34) in tRNA(Ile2) + AMP + diphosphate + H(+). Ligates lysine onto the cytidine present at position 34 of the AUA codon-specific tRNA(Ile) that contains the anticodon CAU, in an ATP-dependent manner. Cytidine is converted to lysidine, thus changing the amino acid specificity of the tRNA from methionine to isoleucine. This Petrotoga mobilis (strain DSM 10674 / SJ95) protein is tRNA(Ile)-lysidine synthase.